Consider the following 424-residue polypeptide: Serine hydroxymethyltransferase (424 aa).

(6S)-5,6,7,8-tetrahydrofolate contacts are provided by residues L113 and G117–L119. K222 carries the post-translational modification N6-(pyridoxal phosphate)lysine. A (6S)-5,6,7,8-tetrahydrofolate-binding site is contributed by S361 to F363.

This sequence belongs to the SHMT family. In terms of assembly, homodimer. Requires pyridoxal 5'-phosphate as cofactor.

The protein resides in the cytoplasm. The catalysed reaction is (6R)-5,10-methylene-5,6,7,8-tetrahydrofolate + glycine + H2O = (6S)-5,6,7,8-tetrahydrofolate + L-serine. It participates in one-carbon metabolism; tetrahydrofolate interconversion. Its pathway is amino-acid biosynthesis; glycine biosynthesis; glycine from L-serine: step 1/1. Catalyzes the reversible interconversion of serine and glycine with tetrahydrofolate (THF) serving as the one-carbon carrier. This reaction serves as the major source of one-carbon groups required for the biosynthesis of purines, thymidylate, methionine, and other important biomolecules. Also exhibits THF-independent aldolase activity toward beta-hydroxyamino acids, producing glycine and aldehydes, via a retro-aldol mechanism. The protein is Serine hydroxymethyltransferase of Flavobacterium johnsoniae (strain ATCC 17061 / DSM 2064 / JCM 8514 / BCRC 14874 / CCUG 350202 / NBRC 14942 / NCIMB 11054 / UW101) (Cytophaga johnsonae).